The primary structure comprises 245 residues: Neurovirulence factor ICP34.5 (245 aa).

Basic residues predominate over residues 1–15; sequence MARRRRRHRGPRRPR. The required for nucleolar localization stretch occupies residues 1–17; the sequence is MARRRRRHRGPRRPRPP. 2 disordered regions span residues 1 to 122 and 143 to 172; these read MARR…PFRL and RRAGGEGAPKPPATPATPATPATPATPATP. Positions 25-36 are enriched in polar residues; the sequence is TAQSQVTSTPNS. Over residues 67–77 the composition is skewed to acidic residues; it reads ASDDDDDDDWP. Composition is skewed to pro residues over residues 78–87 and 113–122; these read DSPPPEPAPE and SHPPSRPFRL. The Nuclear export signal signature appears at 122-131; the sequence is LPPRLALRLR. Tandem repeats lie at residues 155 to 157, 158 to 160, 161 to 163, 164 to 166, 167 to 169, and 170 to 172. The segment at 155–172 is 6 X 3 AA tandem repeats of A-T-P; it reads ATPATPATPATPATPATP. Positions 158 to 172 are enriched in low complexity; the sequence is ATPATPATPATPATP. Residues 172–185 form a binding to PP1CA region; the sequence is PARVRFSPHVRVRH. The tract at residues 172–185 is interaction with host PPP1CA; that stretch reads PARVRFSPHVRVRH. Residues 187-245 are important for interferon resistance; it reads VVWASAARLARRGSWARERADRARFRRRVAEAEAVIGPCLGPEARARALARGAGPANSV. Residues 197–215 carry the Bipartite nuclear localization signal motif; it reads RRGSWARERADRARFRRRV. The interval 215–230 is interaction with host EIF2S1/EIF-2ALPHA; it reads VAEAEAVIGPCLGPEA.

This sequence belongs to the PPP1R15 family. In terms of assembly, interacts with host PPP1CA to form a high-molecular-weight complex that dephosphorylates EIF2S1/eIF-2alpha. Interacts with host EIF2S1/eIF-2alpha; this interaction is crucial for the specific dephosphorylation of EIF2S1/eIF-2alpha by PPP1CA. Binds to proliferating cell nuclear antigen (PCNA), which may release host cells from growth arrest and facilitate viral replication. Interacts (via N-terminus) with host C1QBP and PRKCA. Interacts with protein UL31. Interacts with host TBK1. Interacts with host STING/TMEM173; this interaction inhibits the intracellular DNA sensing pathway. Interacts with host BECN1; this interaction modulates host autophagy.

Its subcellular location is the host cytoplasm. It is found in the host nucleus. It localises to the host nucleolus. The protein localises to the virion. Its function is as follows. Inhibits the establishment of the immune response and of the integrated stress response (ISR) in the infected cell. Plays essential roles in viral nuclear egress to mediate capsid transit across the nuclear membrane. Facilitates nuclear egress cooperatively with host C1QBP and protein kinase C/PKC to induce lamin A/C phosphorylation and subsequent reorganization. In turn, lamina disassembles and nuclear egress occurs. Recruits the serine/threonine protein phosphatase PPP1CA/PP1-alpha to dephosphorylate the translation initiation factor EIF2S1/eIF-2alpha, thereby couteracting the host shutoff of protein synthesis involving double-stranded RNA-dependent protein kinase EIF2AK2/PKR. In turn, controls host IRF3 activation and subsequently inhibits host interferon response. Controls the DNA sensing pathway by interacting with and inhibiting host STING/TMEM173. Also down-modulates the host MHC class II proteins cell surface expression. Acts as a neurovirulence factor that has a profound effect on the growth of the virus in central nervous system tissue, by interacting with host BECN1 and thereby antagonizing the host autophagy response. The chain is Neurovirulence factor ICP34.5 (RL1) from Homo sapiens (Human).